A 596-amino-acid polypeptide reads, in one-letter code: uncharacterized protein (596 aa).

2 stretches are compositionally biased toward basic residues: residues 1–10 and 18–29; these read MRLRSQKRGN and KTRKGKGKKLKP. A disordered region spans residues 1–30; the sequence is MRLRSQKRGNKFVALPAKTRKGKGKKLKPK.

This is an uncharacterized protein from Magallana gigas (Pacific oyster).